The sequence spans 463 residues: Chromosomal replication initiator protein DnaA (463 aa).

The tract at residues 1–83 (MSTNQIILTD…LQLFQHYNNT (83 aa)) is domain I, interacts with DnaA modulators. The tract at residues 83 to 124 (TIKSIEIITKELPGITQTVIALPTKTFADIGSSELNAENIFS) is domain II. The domain III, AAA+ region stretch occupies residues 125–343 (TLDVRFTFDN…GALNKVIAHS (219 aa)). Residues G171, G173, K174, and T175 each contribute to the ATP site. The segment at 344-463 (NFTLKEITLE…INLLMKILQN (120 aa)) is domain IV, binds dsDNA.

It belongs to the DnaA family. As to quaternary structure, oligomerizes as a right-handed, spiral filament on DNA at oriC.

Its subcellular location is the cytoplasm. Plays an essential role in the initiation and regulation of chromosomal replication. ATP-DnaA binds to the origin of replication (oriC) to initiate formation of the DNA replication initiation complex once per cell cycle. Binds the DnaA box (a 9 base pair repeat at the origin) and separates the double-stranded (ds)DNA. Forms a right-handed helical filament on oriC DNA; dsDNA binds to the exterior of the filament while single-stranded (ss)DNA is stabiized in the filament's interior. The ATP-DnaA-oriC complex binds and stabilizes one strand of the AT-rich DNA unwinding element (DUE), permitting loading of DNA polymerase. After initiation quickly degrades to an ADP-DnaA complex that is not apt for DNA replication. Binds acidic phospholipids. This Rickettsia massiliae (strain Mtu5) protein is Chromosomal replication initiator protein DnaA.